We begin with the raw amino-acid sequence, 256 residues long: Small ribosomal subunit protein uS2 (256 aa).

A coiled-coil region spans residues 104-149 (NFKTISQRVHRLEELEALFASPEIEERPKKEQVRLKHELERLQKYL).

Belongs to the universal ribosomal protein uS2 family. As to quaternary structure, part of the 30S ribosomal subunit. Contacts protein S8.

Spans the head-body hinge region of the 30S subunit. Is loosely associated with the 30S subunit. The chain is Small ribosomal subunit protein uS2 (rpsB) from Thermus thermophilus (strain ATCC BAA-163 / DSM 7039 / HB27).